Consider the following 484-residue polypeptide: Cysteine--tRNA ligase (484 aa).

Residue C29 participates in Zn(2+) binding. The 'HIGH' region signature appears at 31-41 (PTVQSAPHIGH). Zn(2+) is bound by residues C219, H244, and E248. The short motif at 275–279 (KMSKS) is the 'KMSKS' region element. Position 278 (K278) interacts with ATP.

The protein belongs to the class-I aminoacyl-tRNA synthetase family. As to quaternary structure, monomer. The cofactor is Zn(2+).

It localises to the cytoplasm. The enzyme catalyses tRNA(Cys) + L-cysteine + ATP = L-cysteinyl-tRNA(Cys) + AMP + diphosphate. This chain is Cysteine--tRNA ligase, found in Clavibacter sepedonicus (Clavibacter michiganensis subsp. sepedonicus).